The sequence spans 466 residues: 3-isopropylmalate dehydratase large subunit (466 aa).

[4Fe-4S] cluster contacts are provided by Cys-347, Cys-407, and Cys-410.

Belongs to the aconitase/IPM isomerase family. LeuC type 1 subfamily. In terms of assembly, heterodimer of LeuC and LeuD. [4Fe-4S] cluster is required as a cofactor.

It carries out the reaction (2R,3S)-3-isopropylmalate = (2S)-2-isopropylmalate. It functions in the pathway amino-acid biosynthesis; L-leucine biosynthesis; L-leucine from 3-methyl-2-oxobutanoate: step 2/4. In terms of biological role, catalyzes the isomerization between 2-isopropylmalate and 3-isopropylmalate, via the formation of 2-isopropylmaleate. This is 3-isopropylmalate dehydratase large subunit from Buchnera aphidicola subsp. Thelaxes suberi.